We begin with the raw amino-acid sequence, 200 residues long: Large ribosomal subunit protein uL4 (200 aa).

A disordered region spans residues 38–65 (GRQGSKAQKTRSEVSGGGKKPWRQKGTG).

Belongs to the universal ribosomal protein uL4 family. In terms of assembly, part of the 50S ribosomal subunit.

Functionally, one of the primary rRNA binding proteins, this protein initially binds near the 5'-end of the 23S rRNA. It is important during the early stages of 50S assembly. It makes multiple contacts with different domains of the 23S rRNA in the assembled 50S subunit and ribosome. Forms part of the polypeptide exit tunnel. This Pseudomonas aeruginosa (strain LESB58) protein is Large ribosomal subunit protein uL4.